Reading from the N-terminus, the 94-residue chain is Co-chaperonin GroES (94 aa).

This sequence belongs to the GroES chaperonin family. As to quaternary structure, heptamer of 7 subunits arranged in a ring. Interacts with the chaperonin GroEL.

Its subcellular location is the cytoplasm. Its function is as follows. Together with the chaperonin GroEL, plays an essential role in assisting protein folding. The GroEL-GroES system forms a nano-cage that allows encapsulation of the non-native substrate proteins and provides a physical environment optimized to promote and accelerate protein folding. GroES binds to the apical surface of the GroEL ring, thereby capping the opening of the GroEL channel. In Streptococcus mitis, this protein is Co-chaperonin GroES.